Consider the following 120-residue polypeptide: NAD(P)H-quinone oxidoreductase subunit 3 (120 aa).

3 helical membrane passes run 6–26, 64–84, and 89–109; these read GYDA…LALV, MFAL…PWAV, and LGLL…VALA.

The protein belongs to the complex I subunit 3 family. In terms of assembly, NDH-1 can be composed of about 15 different subunits; different subcomplexes with different compositions have been identified which probably have different functions.

It localises to the cellular thylakoid membrane. It carries out the reaction a plastoquinone + NADH + (n+1) H(+)(in) = a plastoquinol + NAD(+) + n H(+)(out). The catalysed reaction is a plastoquinone + NADPH + (n+1) H(+)(in) = a plastoquinol + NADP(+) + n H(+)(out). NDH-1 shuttles electrons from an unknown electron donor, via FMN and iron-sulfur (Fe-S) centers, to quinones in the respiratory and/or the photosynthetic chain. The immediate electron acceptor for the enzyme in this species is believed to be plastoquinone. Couples the redox reaction to proton translocation, and thus conserves the redox energy in a proton gradient. Cyanobacterial NDH-1 also plays a role in inorganic carbon-concentration. This is NAD(P)H-quinone oxidoreductase subunit 3 from Prochlorococcus marinus (strain MIT 9313).